We begin with the raw amino-acid sequence, 622 residues long: Probable methionine--tRNA ligase, mitochondrial (622 aa).

The short motif at proline 67–histidine 79 is the 'HIGH' region element. Positions lysine 366–serine 370 match the 'KMSKS' region motif. Lysine 369 provides a ligand contact to ATP. Residues leucine 592–alanine 622 form a disordered region. Over residues glycine 610–alanine 622 the composition is skewed to low complexity.

This sequence belongs to the class-I aminoacyl-tRNA synthetase family.

The protein localises to the mitochondrion matrix. The enzyme catalyses tRNA(Met) + L-methionine + ATP = L-methionyl-tRNA(Met) + AMP + diphosphate. In Neurospora crassa (strain ATCC 24698 / 74-OR23-1A / CBS 708.71 / DSM 1257 / FGSC 987), this protein is Probable methionine--tRNA ligase, mitochondrial.